The following is an 83-amino-acid chain: Small ribosomal subunit protein bS16 (83 aa).

Belongs to the bacterial ribosomal protein bS16 family.

The polypeptide is Small ribosomal subunit protein bS16 (Pseudomonas fluorescens (strain SBW25)).